A 337-amino-acid chain; its full sequence is Ketol-acid reductoisomerase (NADP(+)) (337 aa).

In terms of domain architecture, KARI N-terminal Rossmann spans 3 to 183; it reads VEMFYDADAD…GGARAGVIKT (181 aa). NADP(+) contacts are provided by residues 26–29, lysine 49, serine 52, serine 54, and 84–87; these read YGSQ and DTAQ. Residue histidine 109 is part of the active site. Glycine 135 is an NADP(+) binding site. A KARI C-terminal knotted domain is found at 184-329; it reads TFKEETETDL…KKLRDLMSWV (146 aa). Aspartate 192, glutamate 196, glutamate 228, and glutamate 232 together coordinate Mg(2+). Residue serine 253 participates in substrate binding.

It belongs to the ketol-acid reductoisomerase family. Mg(2+) is required as a cofactor.

The catalysed reaction is (2R)-2,3-dihydroxy-3-methylbutanoate + NADP(+) = (2S)-2-acetolactate + NADPH + H(+). It catalyses the reaction (2R,3R)-2,3-dihydroxy-3-methylpentanoate + NADP(+) = (S)-2-ethyl-2-hydroxy-3-oxobutanoate + NADPH + H(+). Its pathway is amino-acid biosynthesis; L-isoleucine biosynthesis; L-isoleucine from 2-oxobutanoate: step 2/4. It functions in the pathway amino-acid biosynthesis; L-valine biosynthesis; L-valine from pyruvate: step 2/4. Involved in the biosynthesis of branched-chain amino acids (BCAA). Catalyzes an alkyl-migration followed by a ketol-acid reduction of (S)-2-acetolactate (S2AL) to yield (R)-2,3-dihydroxy-isovalerate. In the isomerase reaction, S2AL is rearranged via a Mg-dependent methyl migration to produce 3-hydroxy-3-methyl-2-ketobutyrate (HMKB). In the reductase reaction, this 2-ketoacid undergoes a metal-dependent reduction by NADPH to yield (R)-2,3-dihydroxy-isovalerate. The polypeptide is Ketol-acid reductoisomerase (NADP(+)) (Mycolicibacterium vanbaalenii (strain DSM 7251 / JCM 13017 / BCRC 16820 / KCTC 9966 / NRRL B-24157 / PYR-1) (Mycobacterium vanbaalenii)).